Here is a 578-residue protein sequence, read N- to C-terminus: Probable arginine--tRNA ligase, mitochondrial (578 aa).

Residues 1–16 constitute a mitochondrion transit peptide; the sequence is MACGFRRAIACQLSRV. Residues 133–135, H144, Y322, D326, and Q350 each bind L-arginine; that span reads SPN. The short motif at 133–144 is the 'HIGH' region element; that stretch reads SPNVAKKFHVGH. Residue K568 is modified to N6-acetyllysine.

This sequence belongs to the class-I aminoacyl-tRNA synthetase family.

Its subcellular location is the mitochondrion membrane. The enzyme catalyses tRNA(Arg) + L-arginine + ATP = L-arginyl-tRNA(Arg) + AMP + diphosphate. Functionally, catalyzes the attachment of arginine to tRNA(Arg) in a two-step reaction: arginine is first activated by ATP to form Arg-AMP and then transferred to the acceptor end of tRNA(Arg). The sequence is that of Probable arginine--tRNA ligase, mitochondrial (RARS2) from Homo sapiens (Human).